The primary structure comprises 141 residues: Large ribosomal subunit protein uL16 (141 aa).

This sequence belongs to the universal ribosomal protein uL16 family. As to quaternary structure, part of the 50S ribosomal subunit.

Binds 23S rRNA and is also seen to make contacts with the A and possibly P site tRNAs. The sequence is that of Large ribosomal subunit protein uL16 from Campylobacter concisus (strain 13826).